The sequence spans 332 residues: Serpentine receptor class alpha-10 (332 aa).

Residues 1-26 are Extracellular-facing; it reads MTSSNISICATEDQMVLQTSLLLRVN. A helical membrane pass occupies residues 27 to 47; that stretch reads VILMTTVAIFTFVLTYRALFI. Topologically, residues 48–64 are cytoplasmic; that stretch reads LKQRPIFHKSTKILLYT. A helical membrane pass occupies residues 65-85; the sequence is SLIFVNIHEIIFMVIQCVAFI. Topologically, residues 86–109 are extracellular; that stretch reads RSFTLSDKPCEIMRTTLECRFKNH. A helical transmembrane segment spans residues 110–132; that stretch reads VLIFGIAGMNFNQFGLTVDRLLA. Residues 133-146 are Cytoplasmic-facing; that stretch reads TVIPQTYSHLGSFP. Residues 147–167 form a helical membrane-spanning segment; that stretch reads GILISILVIGCSIAAPLIIAI. Topologically, residues 168–191 are extracellular; sequence GDPYDDIVPNCFFFPQHSAPRANV. A helical transmembrane segment spans residues 192 to 212; it reads FLIILSALVIASIFLNLIIIF. Residues 213–239 are Cytoplasmic-facing; the sequence is ANKKLEKGTRYYVSQRYQKREALISTR. Residues 240 to 260 traverse the membrane as a helical segment; it reads IIVYIAASQFLGMVLYSTIVL. Over 261–276 the chain is Extracellular; that stretch reads TLRLHKSMIPVSMYHN. The helical transmembrane segment at 277–297 threads the bilayer; it reads IVWWAYTVPFAAVALPALLIH. Residues 298 to 332 lie on the Cytoplasmic side of the membrane; it reads RINLVGSNRKRVINRITAKVETQEEHMKSLKELWG.

The protein belongs to the nematode receptor-like protein sra family.

Its subcellular location is the membrane. In Caenorhabditis briggsae, this protein is Serpentine receptor class alpha-10.